Reading from the N-terminus, the 434-residue chain is D-amino acid dehydrogenase (434 aa).

Residue 3 to 17 coordinates FAD; that stretch reads VVILGSGVVGVTSAW.

Belongs to the DadA oxidoreductase family. The cofactor is FAD.

It carries out the reaction a D-alpha-amino acid + A + H2O = a 2-oxocarboxylate + AH2 + NH4(+). The protein operates within amino-acid degradation; D-alanine degradation; NH(3) and pyruvate from D-alanine: step 1/1. Its function is as follows. Oxidative deamination of D-amino acids. In Yersinia pseudotuberculosis serotype O:3 (strain YPIII), this protein is D-amino acid dehydrogenase.